The sequence spans 854 residues: Discoidin domain-containing receptor 2 (854 aa).

Residues 1 to 21 (MIPIPRMPLVLLLLLLILGSA) form the signal peptide. At 22–399 (KAQVNPAICR…MLKVDDSNTR (378 aa)) the chain is on the extracellular side. Residues 30–185 (CRYPLGMSGG…VCMRVELYGC (156 aa)) enclose the F5/8 type C domain. Disulfide bonds link cysteine 30/cysteine 185 and cysteine 73/cysteine 177. Asparagine 121, asparagine 213, asparagine 261, asparagine 280, and asparagine 372 each carry an N-linked (GlcNAc...) asparagine glycan. A helical membrane pass occupies residues 400 to 421 (ILIGCLVAIIFILLAIIVIILW). Residues 422–854 (RQFWQKMLEK…HLLLLQQGAE (433 aa)) are Cytoplasmic-facing. Residues 452 to 471 (SMFNNNRSSSPSEQESNSTY) are disordered. A compositionally biased stretch (low complexity) spans 455–469 (NNNRSSSPSEQESNS). Tyrosine 471 carries the phosphotyrosine; by SRC and autocatalysis modification. The Protein kinase domain maps to 563-848 (LAFKEKLGEG…PSFQEIHLLL (286 aa)). Residues 569–577 (LGEGQFGEV) and lysine 608 contribute to the ATP site. The Proton acceptor role is filled by aspartate 709. 3 positions are modified to phosphotyrosine; by SRC and autocatalysis: tyrosine 735, tyrosine 739, and tyrosine 740.

It belongs to the protein kinase superfamily. Tyr protein kinase family. Insulin receptor subfamily. In terms of assembly, binds hydroxyproline-rich sequence motifs in fibrillar, glycosylated collagen, such as the GQOGVMGFO motif, where O stands for hydroxyproline. Interacts with SRC. Interacts (tyrosine phosphorylated) with SHC1. In terms of processing, N-glycosylated. Tyrosine phosphorylated in response to collagen binding. Phosphorylated by SRC; this is required for activation and subsequent autophosphorylation on additional tyrosine residues. In terms of tissue distribution, widely expressed. Detected in lung, ovary, skin and in testis Leydig cells (at protein level). Widely expressed. Detected at high levels in heart, lung, skeletal muscle, central nervous system (CNS) and kidney, and at lower levels in brain and testis. Detected in chondrocytes in tibia growth plates of young mice.

It localises to the cell membrane. It catalyses the reaction L-tyrosyl-[protein] + ATP = O-phospho-L-tyrosyl-[protein] + ADP + H(+). Present in an inactive state in the absence of collagen binding and phosphorylation by SRC. Tyrosine phosphorylation enhances the affinity for ATP and the catalytic activity. In terms of biological role, tyrosine kinase that functions as a cell surface receptor for fibrillar collagen and regulates cell differentiation, remodeling of the extracellular matrix, cell migration and cell proliferation. Required for normal bone development. Regulates osteoblast differentiation and chondrocyte maturation via a signaling pathway that involves MAP kinases and leads to the activation of the transcription factor RUNX2. Regulates remodeling of the extracellular matrix by up-regulation of the collagenases MMP1, MMP2 and MMP13, and thereby facilitates cell migration and tumor cell invasion. Promotes fibroblast migration and proliferation, and thereby contributes to cutaneous wound healing. The polypeptide is Discoidin domain-containing receptor 2 (Ddr2) (Mus musculus (Mouse)).